The chain runs to 199 residues: Recombination protein RecR (199 aa).

The C4-type zinc finger occupies 57–72 (CEICGNLDTKSICHIC). A Toprim domain is found at 80–175 (STIAIVETVA…KISRLASGIP (96 aa)).

It belongs to the RecR family.

Functionally, may play a role in DNA repair. It seems to be involved in an RecBC-independent recombinational process of DNA repair. It may act with RecF and RecO. This chain is Recombination protein RecR, found in Rickettsia prowazekii (strain Madrid E).